Reading from the N-terminus, the 471-residue chain is Putative multidrug resistance protein MdtD (471 aa).

At 1 to 11 the chain is on the periplasmic side; sequence MTDLPDSTRWQ. The chain crosses the membrane as a helical span at residues 12-32; that stretch reads LWIVAFGFFMQSLDTTIVNTA. Residues 33-48 are Cytoplasmic-facing; the sequence is LPSMAQSLGESPLHMH. Residues 49-69 form a helical membrane-spanning segment; it reads MVIVSYVLTVAVMLPASGWLA. Residues 70–76 are Periplasmic-facing; it reads DKVGVRN. A helical membrane pass occupies residues 77–97; the sequence is IFFTAIVLFTLGSLFCALSGT. The Cytoplasmic segment spans residues 98–101; sequence LNEL. A helical membrane pass occupies residues 102-124; it reads LLARALQGVGGAMMVPVGRLTVM. At 125–137 the chain is on the periplasmic side; it reads KIVPREQYMAAMT. A helical membrane pass occupies residues 138–158; the sequence is FVTLPGQVGPLLGPALGGLLV. Residues 159-164 lie on the Cytoplasmic side of the membrane; the sequence is EYASWH. A helical transmembrane segment spans residues 165–185; it reads WIFLINIPVGIIGAIATLMLM. Residues 186-196 are Periplasmic-facing; it reads PNYTMQTRRFD. A helical membrane pass occupies residues 197-217; the sequence is LSGFLLLAVGMAVLTLALDGS. Over 218–224 the chain is Cytoplasmic; that stretch reads KGTGLSP. The helical transmembrane segment at 225-245 threads the bilayer; the sequence is LTIDGLVAVGVVALVLYLLHA. Residues 246 to 262 lie on the Periplasmic side of the membrane; sequence RNNNRALFSLKLFRTRT. The chain crosses the membrane as a helical span at residues 263–283; the sequence is FSLGLAGSFAGRIGSGMLPFM. The Cytoplasmic segment spans residues 284–285; it reads TP. The chain crosses the membrane as a helical span at residues 286–306; that stretch reads VFLQIGLGFSPFHAGLMMIPM. Residues 307 to 341 lie on the Periplasmic side of the membrane; sequence VLGSMGMKRIVVQVVNRFGYRRVLVATTLGLSLVT. The chain crosses the membrane as a helical span at residues 342 to 362; the sequence is LLFMTTALLGWYYVLPFVLFL. Over 363–395 the chain is Cytoplasmic; the sequence is QGMVNSTRFSSMNTLTLKDLPDNLASSGNSLLS. The helical transmembrane segment at 396 to 416 threads the bilayer; that stretch reads MIMQLSMSIGVTIAGLLLGLF. Topologically, residues 417–430 are periplasmic; it reads GSQHVSVDSGTTQT. The helical transmembrane segment at 431 to 451 threads the bilayer; it reads VFMYTWLSMAFIIALPAFIFA. The Cytoplasmic portion of the chain corresponds to 452-471; sequence RVPNDTHQNVAISRRKRSAQ.

It belongs to the major facilitator superfamily. TCR/Tet family.

It localises to the cell inner membrane. This Escherichia coli O8 (strain IAI1) protein is Putative multidrug resistance protein MdtD.